Here is a 1001-residue protein sequence, read N- to C-terminus: TonB-dependent receptor P3 (1001 aa).

The N-terminal stretch at 1–26 (MTTKNNKQLKSVLFMFLLLIGAYVKA) is a signal peptide. The TonB box signature appears at 109-116 (EEIVVIGY). The TBDR plug domain maps to 120–232 (KKSDVSGSVS…ANGVIMVTTK (113 aa)). Positions 238–1001 (KPTLELNTSY…TFTMGLNMKF (764 aa)) constitute a TBDR beta-barrel domain. The TonB C-terminal box signature appears at 984-1001 (YGSYPNVRTFTMGLNMKF).

This sequence belongs to the TonB-dependent receptor family.

It localises to the cell outer membrane. Functionally, tonB-dependent receptor probably involved in ulvan degradation. Ulvan is the main polysaccharide component of the Ulvales (green seaweed) cell wall. It is composed of disaccharide building blocks comprising 3-sulfated rhamnose (Rha3S) linked to D-glucuronic acid (GlcA), L-iduronic acid (IduA), or D-xylose (Xyl). The TonB-dependent receptor may mediate transport of ulvan oligosaccharides from the surface of the outer membrane to the periplasm for subsequent degradation. This Formosa agariphila (strain DSM 15362 / KCTC 12365 / LMG 23005 / KMM 3901 / M-2Alg 35-1) protein is TonB-dependent receptor P3.